The chain runs to 500 residues: Proline--tRNA ligase (500 aa).

This sequence belongs to the class-II aminoacyl-tRNA synthetase family. ProS type 3 subfamily. Homodimer.

It is found in the cytoplasm. The enzyme catalyses tRNA(Pro) + L-proline + ATP = L-prolyl-tRNA(Pro) + AMP + diphosphate. In terms of biological role, catalyzes the attachment of proline to tRNA(Pro) in a two-step reaction: proline is first activated by ATP to form Pro-AMP and then transferred to the acceptor end of tRNA(Pro). This is Proline--tRNA ligase from Paramagnetospirillum magneticum (strain ATCC 700264 / AMB-1) (Magnetospirillum magneticum).